The chain runs to 316 residues: Ribosomal RNA small subunit methyltransferase A (316 aa).

Residues N33, V35, G60, E81, D110, and N133 each contribute to the S-adenosyl-L-methionine site.

The protein belongs to the class I-like SAM-binding methyltransferase superfamily. rRNA adenine N(6)-methyltransferase family. RsmA subfamily.

The protein resides in the cytoplasm. It carries out the reaction adenosine(1518)/adenosine(1519) in 16S rRNA + 4 S-adenosyl-L-methionine = N(6)-dimethyladenosine(1518)/N(6)-dimethyladenosine(1519) in 16S rRNA + 4 S-adenosyl-L-homocysteine + 4 H(+). Specifically dimethylates two adjacent adenosines (A1518 and A1519) in the loop of a conserved hairpin near the 3'-end of 16S rRNA in the 30S particle. May play a critical role in biogenesis of 30S subunits. The polypeptide is Ribosomal RNA small subunit methyltransferase A (Corynebacterium jeikeium (strain K411)).